A 511-amino-acid polypeptide reads, in one-letter code: Signal transduction histidine-protein kinase/phosphatase MprB (511 aa).

Residues 1–26 (MVGFRRGPRAPLRATSSLSLRWRVML) are Cytoplasmic-facing. Residues 27–47 (LAMSMVAMVVVLMSFAVYAVI) traverse the membrane as a helical segment. Residues 48-163 (SAALYSDIDN…PTEAVMTKLR (116 aa)) are Extracellular-facing. The chain crosses the membrane as a helical span at residues 164–184 (AVLLIVGGVGVAVAAVAGGMV). Residues 185–511 (TRAGLRPVGR…SVDSQSARAR (327 aa)) lie on the Cytoplasmic side of the membrane. The 53-residue stretch at 186–238 (RAGLRPVGRLTEAAERVARTDDLRPIPVFGSDELARLTEAFNLMLRALAESRE) folds into the HAMP domain. The Histidine kinase domain maps to 246–466 (DAGHELRTPL…AICMLLPGRP (221 aa)). Residue histidine 249 is modified to Phosphohistidine; by autocatalysis. The interval 468–511 (PDSAYPAAPDDKKTEPVDTRGANGANSRGSANVISVDSQSARAR) is disordered. A compositionally biased stretch (basic and acidic residues) spans 476–485 (PDDKKTEPVD). The span at 491 to 511 (GANSRGSANVISVDSQSARAR) shows a compositional bias: polar residues.

Requires Mg(2+) as cofactor. Mn(2+) is required as a cofactor. In terms of processing, autophosphorylated.

The protein localises to the cell membrane. The catalysed reaction is ATP + protein L-histidine = ADP + protein N-phospho-L-histidine.. Functionally, member of the two-component regulatory system MprB/MprA which contributes to maintaining a balance among several systems involved in stress resistance and is required for establishment and maintenance of persistent infection in the host. In response to environmental signals MprB acts both as a membrane-associated protein kinase that undergoes autophosphorylation and subsequently transfers the phosphate to MprA, and a protein phosphatase that dephosphorylates phospho-MprA. This chain is Signal transduction histidine-protein kinase/phosphatase MprB (mprB), found in Mycobacterium ulcerans (strain Agy99).